The primary structure comprises 316 residues: 2-phospho-L-lactate guanylyltransferase (316 aa).

Residues 72-85 (TGVSTEAVSTSTST) show a composition bias toward low complexity. 2 disordered regions span residues 72–107 (TGVS…PTHT) and 119–138 (LRDD…DGDK). Residues 92-107 (HNAASDNYVSQSPTHT) are compositionally biased toward polar residues.

This sequence belongs to the CofC family. Homodimer.

The enzyme catalyses (2S)-2-phospholactate + GTP + H(+) = (2S)-lactyl-2-diphospho-5'-guanosine + diphosphate. It participates in cofactor biosynthesis; coenzyme F420 biosynthesis. Guanylyltransferase that catalyzes the activation of (2S)-2-phospholactate (2-PL) as (2S)-lactyl-2-diphospho-5'-guanosine, via the condensation of 2-PL with GTP. It is involved in the biosynthesis of coenzyme F420, a hydride carrier cofactor. In Haloquadratum walsbyi (strain DSM 16790 / HBSQ001), this protein is 2-phospho-L-lactate guanylyltransferase.